The sequence spans 1337 residues: uncharacterized protein (1337 aa).

Disordered regions lie at residues 1–94 (MPTS…QSSA) and 119–174 (ARDI…PSFF). Composition is skewed to low complexity over residues 18-37 (SNTS…ASGS) and 68-79 (SSTHFQSSHSVS). A compositionally biased stretch (polar residues) spans 80 to 94 (NAHNQSPLNQSQSSA). Positions 123-147 (PQQPSHSQNPSSSSSSSSSQSSQHS) are enriched in low complexity. The segment covering 157–167 (NEKKSLDDPSP) has biased composition (basic and acidic residues). The next 6 helical transmembrane spans lie at 209–229 (GLKP…LVLA), 241–261 (FFVV…PMLW), 267–287 (FLLL…ATVA), 328–348 (VRPL…ALFI), 361–381 (CVFS…YPYF), and 387–407 (LFFI…TLFI). 2 disordered regions span residues 623-662 (SHVR…SHKS) and 868-894 (YDEN…DADH). A compositionally biased stretch (polar residues) spans 626–644 (RTGSNNSEAPLAAKTSTTK). Basic and acidic residues predominate over residues 868–880 (YDENIHNDVDKDM). A run of 6 helical transmembrane segments spans residues 917 to 937 (MNVF…PAFC), 975 to 995 (IFGT…GSGH), 997 to 1017 (LGNA…IQFI), 1021 to 1041 (FVIL…LTVT), 1066 to 1086 (FLTV…PQPR), and 1275 to 1295 (FAVG…IMFI).

It localises to the membrane. This is an uncharacterized protein from Schizosaccharomyces pombe (strain 972 / ATCC 24843) (Fission yeast).